Consider the following 91-residue polypeptide: Small ribosomal subunit protein uS19 (91 aa).

The protein belongs to the universal ribosomal protein uS19 family.

In terms of biological role, protein S19 forms a complex with S13 that binds strongly to the 16S ribosomal RNA. This is Small ribosomal subunit protein uS19 from Prochlorococcus marinus (strain NATL1A).